The chain runs to 3082 residues: Autotransporter adhesin BadA (3082 aa).

Residues 1–47 (MKKLSVTSKRQYNLYASPISRRLSLLMKLSLETVTVMFLLGASPVLA) form the signal peptide. The segment at 48–376 (SNLALTGAKN…DAVNVAQLKA (329 aa)) is binds to host cells. Residues 48 to 2901 (SNLALTGAKN…KVQDIATVAD (2854 aa)) are surface exposed passenger domain. The segment at 53 to 2850 (TGAKNLSQNS…DARHNGVDSK (2798 aa)) is does not bind host cells, no host proangiogenic cytokine induction, collagen or fibronectin, no autoagglutination. The segment at 470 to 2850 (ITGVAEGTDA…DARHNGVDSK (2381 aa)) is required to bind fibronectin, not required for surface expression on bacteria, bacterial autoagglutination, host cell binding, collagen binding or host proangiogenic cytokine induction. The segment at 2902 to 3027 (SAVKYEKDST…VSNLRYYDIP (126 aa)) is outer membrane translocation of the passenger domain. Transmembrane regions (beta stranded) follow at residues 3028–3039 (GSLSLSFGTGIW), 3044–3051 (AFAIGAGY), 3055–3065 (DGNIRSNLSIT), and 3070–3082 (QWGVGAGITLRLK). The tract at residues 3028–3082 (GSLSLSFGTGIWRSQSAFAIGAGYTSEDGNIRSNLSITSSGGQWGVGAGITLRLK) is translocator domain.

This sequence belongs to the autotransporter-2 (AT-2) (TC 1.B.40) family. In terms of assembly, homotrimer. Crystals of the head region form trimers.

It is found in the cell surface. The protein resides in the cell outer membrane. Its function is as follows. Mediates bacterial adherence to host endothelial cells and host extracellular matrix proteins (collagen type I, III, IV, laminin and fibronectin). Static versus dynamic adherence results differ slightly; in dynamic adherence studies bacteria bind to fixed components under a constant defined flow rate to simulate in vivo infection conditions. Induces secretion of host proangiogenic cytokines such as VEGFA, ADM, IGFBP-3 and IL-8. May prevent bacterial phagocytosis by macrophages. Probably mediates bacterial autoagglutination. Negatively impacts type IV secretion system effectors (VirB/D4 T4SS and its substrate Bep proteins), possibly by preventing close association of host and bacterial cells. This implies the 2 factors are expressed at different times during infection. The protein is Autotransporter adhesin BadA of Bartonella henselae (Rochalimaea henselae).